Here is a 363-residue protein sequence, read N- to C-terminus: Protein-arginine kinase (363 aa).

Positions 24–255 (IVLSSRIRLA…QQLIAQERAA (232 aa)) constitute a Phosphagen kinase C-terminal domain. ATP is bound by residues 27-31 (SSRIR), His-92, Arg-126, 177-181 (RASVM), and 208-213 (RGTYGE). The RDXXRA motif of the pArg binding pocket involved in allosteric regulation signature appears at 338–343 (RDVRRA).

This sequence belongs to the ATP:guanido phosphotransferase family.

It catalyses the reaction L-arginyl-[protein] + ATP = N(omega)-phospho-L-arginyl-[protein] + ADP + H(+). Its activity is regulated as follows. Appears to be allosterically activated by the binding of pArg-containing polypeptides to the pArg-binding pocket localized in the C-terminal domain of McsB. Catalyzes the specific phosphorylation of arginine residues in a large number of proteins. Is part of the bacterial stress response system. Protein arginine phosphorylation has a physiologically important role and is involved in the regulation of many critical cellular processes, such as protein homeostasis, motility, competence, and stringent and stress responses, by regulating gene expression and protein activity. This Geobacillus kaustophilus (strain HTA426) protein is Protein-arginine kinase.